Consider the following 358-residue polypeptide: Probable RNA methyltransferase MXAN_6459 (358 aa).

Glu-92 functions as the Proton acceptor in the catalytic mechanism. The Radical SAM core domain maps to 99–327 (FDEKYVICVS…PVARRYSGGK (229 aa)). An intrachain disulfide couples Cys-106 to Cys-333. 3 residues coordinate [4Fe-4S] cluster: Cys-113, Cys-117, and Cys-120. S-adenosyl-L-methionine is bound by residues 160-161 (GE), Ser-192, 215-217 (SVT), and Asp-289. Cys-333 serves as the catalytic S-methylcysteine intermediate.

It belongs to the radical SAM superfamily. RlmN family. The cofactor is [4Fe-4S] cluster.

The protein resides in the cytoplasm. The protein is Probable RNA methyltransferase MXAN_6459 of Myxococcus xanthus (strain DK1622).